The following is a 352-amino-acid chain: Probable dual-specificity RNA methyltransferase RlmN (352 aa).

Glu99 acts as the Proton acceptor in catalysis. Positions Thr105–Asp339 constitute a Radical SAM core domain. Cys112 and Cys344 form a disulfide bridge. [4Fe-4S] cluster contacts are provided by Cys119, Cys123, and Cys126. Residues Gly170–Glu171, Ser202, Ser225–His227, and Asn301 each bind S-adenosyl-L-methionine. Cys344 (S-methylcysteine intermediate) is an active-site residue.

It belongs to the radical SAM superfamily. RlmN family. It depends on [4Fe-4S] cluster as a cofactor.

The protein resides in the cytoplasm. The catalysed reaction is adenosine(2503) in 23S rRNA + 2 reduced [2Fe-2S]-[ferredoxin] + 2 S-adenosyl-L-methionine = 2-methyladenosine(2503) in 23S rRNA + 5'-deoxyadenosine + L-methionine + 2 oxidized [2Fe-2S]-[ferredoxin] + S-adenosyl-L-homocysteine. The enzyme catalyses adenosine(37) in tRNA + 2 reduced [2Fe-2S]-[ferredoxin] + 2 S-adenosyl-L-methionine = 2-methyladenosine(37) in tRNA + 5'-deoxyadenosine + L-methionine + 2 oxidized [2Fe-2S]-[ferredoxin] + S-adenosyl-L-homocysteine. Functionally, specifically methylates position 2 of adenine 2503 in 23S rRNA and position 2 of adenine 37 in tRNAs. This is Probable dual-specificity RNA methyltransferase RlmN from Christiangramia forsetii (strain DSM 17595 / CGMCC 1.15422 / KT0803) (Gramella forsetii).